A 162-amino-acid chain; its full sequence is Large ribosomal subunit protein bL17 (162 aa).

Basic and acidic residues predominate over residues 125-140 (AAKEAPAKEVAEEKAA). The interval 125 to 162 (AAKEAPAKEVAEEKAAKPAKKAAPKKAEKEEAEDAAEA) is disordered.

This sequence belongs to the bacterial ribosomal protein bL17 family. Part of the 50S ribosomal subunit. Contacts protein L32.

This is Large ribosomal subunit protein bL17 from Oleidesulfovibrio alaskensis (strain ATCC BAA-1058 / DSM 17464 / G20) (Desulfovibrio alaskensis).